A 398-amino-acid polypeptide reads, in one-letter code: Phosphoglycerate kinase (398 aa).

Residues 21–23 (DFN), arginine 36, 59–62 (HLGR), arginine 119, and arginine 157 contribute to the substrate site. ATP contacts are provided by residues lysine 208, glycine 296, glutamate 327, and 354-357 (GGDS).

The protein belongs to the phosphoglycerate kinase family. Monomer.

The protein localises to the cytoplasm. It carries out the reaction (2R)-3-phosphoglycerate + ATP = (2R)-3-phospho-glyceroyl phosphate + ADP. It participates in carbohydrate degradation; glycolysis; pyruvate from D-glyceraldehyde 3-phosphate: step 2/5. The polypeptide is Phosphoglycerate kinase (Streptococcus agalactiae serotype Ia (strain ATCC 27591 / A909 / CDC SS700)).